Reading from the N-terminus, the 483-residue chain is V-type proton ATPase subunit B 2 (483 aa).

It belongs to the ATPase alpha/beta chains family. In terms of assembly, V-ATPase is a heteromultimeric enzyme composed of a peripheral catalytic V1 complex (main components: subunits A, B, C, D, E, and F) attached to an integral membrane V0 proton pore complex (main component: the proteolipid protein).

Functionally, non-catalytic subunit of the peripheral V1 complex of vacuolar ATPase. V-ATPase is responsible for acidifying a variety of intracellular compartments in eukaryotic cells. This Hordeum vulgare (Barley) protein is V-type proton ATPase subunit B 2.